A 450-amino-acid polypeptide reads, in one-letter code: Probable malate:quinone oxidoreductase (450 aa).

This sequence belongs to the MQO family. FAD is required as a cofactor.

The enzyme catalyses (S)-malate + a quinone = a quinol + oxaloacetate. Its pathway is carbohydrate metabolism; tricarboxylic acid cycle; oxaloacetate from (S)-malate (quinone route): step 1/1. The chain is Probable malate:quinone oxidoreductase from Helicobacter acinonychis (strain Sheeba).